A 463-amino-acid chain; its full sequence is Argininosuccinate lyase (463 aa).

This sequence belongs to the lyase 1 family. Argininosuccinate lyase subfamily.

It is found in the cytoplasm. The enzyme catalyses 2-(N(omega)-L-arginino)succinate = fumarate + L-arginine. The protein operates within amino-acid biosynthesis; L-arginine biosynthesis; L-arginine from L-ornithine and carbamoyl phosphate: step 3/3. This chain is Argininosuccinate lyase, found in Chlorobaculum tepidum (strain ATCC 49652 / DSM 12025 / NBRC 103806 / TLS) (Chlorobium tepidum).